We begin with the raw amino-acid sequence, 706 residues long: Transferrin-binding protein B (706 aa).

The signal sequence occupies residues M1–A20. Residue C21 is the site of N-palmitoyl cysteine attachment. C21 is lipidated: S-diacylglycerol cysteine. Disordered stretches follow at residues G26–V92 and G384–G412. Gly residues predominate over residues G42–G51. Over residues S389 to E410 the composition is skewed to basic and acidic residues.

Belongs to the TbpB family.

It localises to the cell outer membrane. The protein resides in the cell surface. Moraxella acquires iron by extracting it from serum transferrin (TF) in its human host. Acts as a transferrin receptor and is required for transferrin utilization. In Moraxella catarrhalis (Branhamella catarrhalis), this protein is Transferrin-binding protein B.